Here is a 66-residue protein sequence, read N- to C-terminus: Large ribosomal subunit protein bL32 (66 aa).

The protein belongs to the bacterial ribosomal protein bL32 family.

The protein is Large ribosomal subunit protein bL32 of Leptospira interrogans serogroup Icterohaemorrhagiae serovar copenhageni (strain Fiocruz L1-130).